A 143-amino-acid polypeptide reads, in one-letter code: uncharacterized protein (143 aa).

Positions 1–37 (MSAPASSSAIAPSQPTAPGHARHSASWSASASDPSGA) are disordered.

The protein belongs to the dynein light chain Tctex-type family.

This is an uncharacterized protein from Mycosarcoma maydis (Corn smut fungus).